The sequence spans 548 residues: T-complex protein 1 subunit theta (548 aa).

An N-acetylalanine modification is found at A2. S23 carries the post-translational modification Phosphoserine. At Y30 the chain carries Phosphotyrosine. 2 residues coordinate ADP: Y47 and G48. Residue D99 participates in Mg(2+) binding. ADP-binding residues include G100, T101, N102, and F103. Residues G100, T101, and N102 each contribute to the ATP site. At S162 the chain carries Phosphoserine. Positions 169, 170, and 171 each coordinate ADP. Residues S170 and K171 each coordinate ATP. Glycyl lysine isopeptide (Lys-Gly) (interchain with G-Cter in SUMO2) cross-links involve residues K224, K254, and K260. Residues S269 and S317 each carry the phosphoserine modification. 2 positions are modified to N6-acetyllysine: K318 and K400. G412 serves as a coordination point for ADP. Residue G412 participates in ATP binding. A Glycyl lysine isopeptide (Lys-Gly) (interchain with G-Cter in SUMO1) cross-link involves residue K459. N6-acetyllysine is present on K466. Position 499 (D499) interacts with ADP. 2 residues coordinate ATP: D499 and K504. Phosphotyrosine is present on Y505. The tract at residues 529 to 548 is disordered; sequence PAGGPKPPSGKKDWDDDQND. K534 participates in a covalent cross-link: Glycyl lysine isopeptide (Lys-Gly) (interchain with G-Cter in SUMO2). S537 is subject to Phosphoserine. K539 participates in a covalent cross-link: Glycyl lysine isopeptide (Lys-Gly) (interchain with G-Cter in SUMO2).

Belongs to the TCP-1 chaperonin family. In terms of assembly, component of the chaperonin-containing T-complex (TRiC), a hexadecamer composed of two identical back-to-back stacked rings enclosing a protein folding chamber. Each ring is made up of eight different subunits: TCP1/CCT1, CCT2, CCT3, CCT4, CCT5, CCT6A/CCT6, CCT7, CCT8. Interacts with PACRG. Interacts with DNAAF4. Interacts with synaptic plasticity regulator PANTS.

It is found in the cytoplasm. Its subcellular location is the cytoskeleton. The protein resides in the microtubule organizing center. The protein localises to the centrosome. It localises to the cilium basal body. The catalysed reaction is ATP + H2O = ADP + phosphate + H(+). In terms of biological role, component of the chaperonin-containing T-complex (TRiC), a molecular chaperone complex that assists the folding of actin, tubulin and other proteins upon ATP hydrolysis. The TRiC complex mediates the folding of WRAP53/TCAB1, thereby regulating telomere maintenance. As part of the TRiC complex may play a role in the assembly of BBSome, a complex involved in ciliogenesis regulating transports vesicles to the cilia. The polypeptide is T-complex protein 1 subunit theta (Cct8) (Mus musculus (Mouse)).